The sequence spans 254 residues: Major prion protein (254 aa).

The signal sequence occupies residues 1-22; sequence MANLGYWLLALFVTMWTDVGLC. The interval 23-38 is interaction with ADGRG6; that stretch reads KKRPKPGGWNTGGSRY. The segment at 23–231 is interaction with GRB2, ERI3 and SYN1; sequence KKRPKPGGWN…QAYYDGRRSS (209 aa). The interval 25–104 is disordered; it reads RPKPGGWNTG…HNQWNKPSKP (80 aa). At Pro44 the chain carries Hydroxyproline. Repeat copies occupy residues 51–58, 59–66, 67–74, 75–82, and 83–90. The interval 51 to 90 is 5 X 8 AA tandem repeats of P-H-G-G-G-W-G-Q; that stretch reads PQGGTWGQPHGGGWGQPHGGSWGQPHGGSWGQPHGGGWGQ. Residues 54 to 94 are compositionally biased toward gly residues; sequence GTWGQPHGGGWGQPHGGSWGQPHGGSWGQPHGGGWGQGGGT. Residues His60, Gly61, Gly62, His68, Gly69, Gly70, His76, Gly77, Gly78, His84, Gly85, and Gly86 each contribute to the Cu(2+) site. Cys178 and Cys213 are joined by a disulfide. N-linked (GlcNAc...) asparagine glycans are attached at residues Asn180 and Asn196. The GPI-anchor amidated serine moiety is linked to residue Ser230. Positions 231–254 are cleaved as a propeptide — removed in mature form; the sequence is SSTVLFSSPPVILLISFLIFLIVG.

Belongs to the prion family. As to quaternary structure, monomer and homodimer. Has a tendency to aggregate into amyloid fibrils containing a cross-beta spine, formed by a steric zipper of superposed beta-strands. Soluble oligomers may represent an intermediate stage on the path to fibril formation. Copper binding may promote oligomerization. Interacts with GRB2, APP, ERI3/PRNPIP and SYN1. Mislocalized cytosolically exposed PrP interacts with MGRN1; this interaction alters MGRN1 subcellular location and causes lysosomal enlargement. Interacts with APP. Interacts with KIAA1191. Interacts with ADGRG6. In terms of processing, N-glycosylated. In terms of tissue distribution, highly expressed in the brain, lung, kidney and heart. Expressed at low levels in the liver and spleen.

The protein localises to the cell membrane. The protein resides in the golgi apparatus. Its primary physiological function is unclear. May play a role in neuronal development and synaptic plasticity. May be required for neuronal myelin sheath maintenance. May promote myelin homeostasis through acting as an agonist for ADGRG6 receptor. May play a role in iron uptake and iron homeostasis. Soluble oligomers are toxic to cultured neuroblastoma cells and induce apoptosis (in vitro). Association with GPC1 (via its heparan sulfate chains) targets PRNP to lipid rafts. Also provides Cu(2+) or Zn(2+) for the ascorbate-mediated GPC1 deaminase degradation of its heparan sulfate side chains. The chain is Major prion protein (Prnp) from Mus musculus (Mouse).